Here is a 413-residue protein sequence, read N- to C-terminus: DNA primase large subunit PriL (413 aa).

[4Fe-4S] cluster contacts are provided by Cys230, Cys301, Cys310, and Cys317. 3 stretches are compositionally biased toward basic and acidic residues: residues 340–356 (MEKE…QEEK), 362–381 (KEKQ…EEKG), and 388–413 (KKRE…KKRI). Residues 340–413 (MEKEKEEKEE…KEKQEEKKRI (74 aa)) form a disordered region.

This sequence belongs to the eukaryotic-type primase large subunit family. As to quaternary structure, heterodimer of a small subunit (PriS) and a large subunit (PriL). Requires [4Fe-4S] cluster as cofactor.

Functionally, regulatory subunit of DNA primase, an RNA polymerase that catalyzes the synthesis of short RNA molecules used as primers for DNA polymerase during DNA replication. Stabilizes and modulates the activity of the small subunit, increasing the rate of DNA synthesis, and conferring RNA synthesis capability. The DNA polymerase activity may enable DNA primase to also catalyze primer extension after primer synthesis. May also play a role in DNA repair. The chain is DNA primase large subunit PriL from Methanosarcina barkeri (strain Fusaro / DSM 804).